A 239-amino-acid polypeptide reads, in one-letter code: Fatty acid metabolism regulator protein (239 aa).

The region spanning Gln6–Phe74 is the HTH gntR-type domain. Positions Glu34–Gln53 form a DNA-binding region, H-T-H motif.

Homodimer.

It is found in the cytoplasm. Multifunctional regulator of fatty acid metabolism. In Yersinia enterocolitica serotype O:8 / biotype 1B (strain NCTC 13174 / 8081), this protein is Fatty acid metabolism regulator protein.